An 88-amino-acid chain; its full sequence is ATP synthase F(0) complex subunit f, mitochondrial (88 aa).

N-acetylalanine is present on Ala-2. Ser-3 is modified (phosphoserine). Position 16 is an N6-acetyllysine (Lys-16). The helical transmembrane segment at 62–79 (MVLAAYVVFNYCRSYKEL) threads the bilayer.

It belongs to the ATPase F chain family. As to quaternary structure, component of the ATP synthase complex composed at least of ATP5F1A/subunit alpha, ATP5F1B/subunit beta, ATP5MC1/subunit c (homooctomer), MT-ATP6/subunit a, MT-ATP8/subunit 8, ATP5ME/subunit e, ATP5MF/subunit f, ATP5MG/subunit g, ATP5MK/subunit k, ATP5MJ/subunit j, ATP5F1C/subunit gamma, ATP5F1D/subunit delta, ATP5F1E/subunit epsilon, ATP5PF/subunit F6, ATP5PB/subunit b, ATP5PD/subunit d, ATP5PO/subunit OSCP. ATP synthase complex consists of a soluble F(1) head domain (subunits alpha(3) and beta(3)) - the catalytic core - and a membrane F(0) domain - the membrane proton channel (subunits c, a, 8, e, f, g, k and j). These two domains are linked by a central stalk (subunits gamma, delta, and epsilon) rotating inside the F1 region and a stationary peripheral stalk (subunits F6, b, d, and OSCP).

It is found in the mitochondrion. Its subcellular location is the mitochondrion inner membrane. Functionally, subunit f, of the mitochondrial membrane ATP synthase complex (F(1)F(0) ATP synthase or Complex V) that produces ATP from ADP in the presence of a proton gradient across the membrane which is generated by electron transport complexes of the respiratory chain. ATP synthase complex consist of a soluble F(1) head domain - the catalytic core - and a membrane F(1) domain - the membrane proton channel. These two domains are linked by a central stalk rotating inside the F(1) region and a stationary peripheral stalk. During catalysis, ATP synthesis in the catalytic domain of F(1) is coupled via a rotary mechanism of the central stalk subunits to proton translocation. In vivo, can only synthesize ATP although its ATP hydrolase activity can be activated artificially in vitro. Part of the complex F(0) domain. This chain is ATP synthase F(0) complex subunit f, mitochondrial, found in Sus scrofa (Pig).